A 224-amino-acid chain; its full sequence is tRNA pseudouridine synthase B (224 aa).

Catalysis depends on Asp-46, which acts as the Nucleophile.

The protein belongs to the pseudouridine synthase TruB family. Type 1 subfamily.

It catalyses the reaction uridine(55) in tRNA = pseudouridine(55) in tRNA. In terms of biological role, responsible for synthesis of pseudouridine from uracil-55 in the psi GC loop of transfer RNAs. This chain is tRNA pseudouridine synthase B, found in Methylococcus capsulatus (strain ATCC 33009 / NCIMB 11132 / Bath).